A 667-amino-acid polypeptide reads, in one-letter code: Transcription factor 4 (667 aa).

The segment at 1 to 83 (MHHQQRMAAL…GTPYDHMTSR (83 aa)) is essential for MYOD1 inhibition. Residues 18–26 (DLLDFSAMF) carry the 9aaTAD motif. Disordered regions lie at residues 24-245 (AMFS…LGNS), 263-321 (LSYP…SQTG), 336-379 (HTNN…EGPL), 466-570 (SLLP…MANN), and 634-667 (KRREEEKVSSEPPPLSLAGPHPGMGDASNHMGQM). Residues 29–49 (PVSSGKNGPTSLASGHFTGSN) are compositionally biased toward polar residues. Phosphoserine occurs at positions 66, 87, and 92. 4 stretches are compositionally biased toward polar residues: residues 107–126 (GSYSSYGRESNLQGCHQQSL), 137–155 (GTLSPTKPGSQYYQYSSNN), 205–216 (KPATSTFPSSFF), and 266–306 (PSHS…TDSI). Residues 337–348 (TNNSFSSNPSTP) show a composition bias toward low complexity. The segment covering 365-374 (NGGQASSSPN) has biased composition (polar residues). Residue S372 is modified to Phosphoserine. The tract at residues 379 to 400 (LHSLQSRIEDRLERLDDAIHVL) is leucine-zipper. Composition is skewed to low complexity over residues 467 to 480 (LLPNQVPVPQLPVQ) and 503 to 512 (GQSVSSGSSE). S515 is modified (phosphoserine). 2 stretches are compositionally biased toward basic and acidic residues: residues 527 to 542 (KSSEDKKLDDDKKDIK) and 555 to 570 (PEQKAEREKERRMANN). Positions 564-617 (ERRMANNARERLRVRDINEAFKELGRMVQLHLKSDKPQTKLLILHQAVAVILSL) constitute a bHLH domain. Residues 619–642 (QQVRERNLNPKAACLKRREEEKVS) are class A specific domain.

Efficient DNA binding requires dimerization with another bHLH protein. Forms homo- or heterooligomers with myogenin. Interacts with HIVEP2. Interacts with NEUROD2. Interacts with AGBL1. Interacts with BHLHA9. As to expression, expressed in adult heart, brain, placenta, skeletal muscle and to a lesser extent in the lung. In developing embryonic tissues, expression mostly occurs in the brain.

The protein resides in the nucleus. Transcription factor that binds to the immunoglobulin enhancer Mu-E5/KE5-motif. Involved in the initiation of neuronal differentiation. Activates transcription by binding to the E box (5'-CANNTG-3'). Binds to the E-box present in the somatostatin receptor 2 initiator element (SSTR2-INR) to activate transcription. Preferentially binds to either 5'-ACANNTGT-3' or 5'-CCANNTGG-3'. This Homo sapiens (Human) protein is Transcription factor 4 (TCF4).